The primary structure comprises 455 residues: MAPPPPHIAVVAFPFSSHAAVLFSFARALAAAAPAGTSLSFLTTADNAAQLRKAGALPGNLRFVEVPDGVPPGETSCLSPPRRMDLFMAAAEAGGVRVGLEAACASAGGARVSCVVGDAFVWTADAASAAGAPWVAVWTAASCALLAHLRTDALRRDVGDQAASRADELLVAHAGLGGYRVRDLPDGVVSGDFNYVISLLVHRQAQRLPKAATAVALNTFPGLDPPDLIAALAAELPNCLPLGPYHLLPGAEPTADTNEAPADPHGCLAWLDRRPARSVAYVSFGTNATARPDELQELAAGLEASGAPFLWSLRGVVAAAPRGFLERAPGLVVPWAPQVGVLRHAAVGAFVTHAGWASVMEGVSSGVPMACRPFFGDQTMNARSVASVWGFGTAFDGPMTRGAVANAVATLLRGEDGERMRAKAQELQAMVGKAFEPDGGCRKNFDEFVEIVCRV.

Residue histidine 18 is the Proton acceptor of the active site. Histidine 18 serves as a coordination point for an anthocyanidin. Aspartate 118 acts as the Charge relay in catalysis. Threonine 139 contributes to the UDP-alpha-D-glucose binding site. Residue histidine 148 coordinates an anthocyanidin. UDP-alpha-D-glucose is bound by residues alanine 336, glutamine 338, histidine 353, tryptophan 356, serine 358, and glutamate 361. An an anthocyanidin-binding site is contributed by glycine 376. UDP-alpha-D-glucose is bound by residues aspartate 377 and glutamine 378.

This sequence belongs to the UDP-glycosyltransferase family.

It catalyses the reaction an anthocyanidin + UDP-alpha-D-glucose + H(+) = an anthocyanidin 3-O-beta-D-glucoside + UDP. It participates in pigment biosynthesis; anthocyanin biosynthesis. In terms of biological role, in the presence of other necessary color factors, this glycosylation reaction allows the accumulation of anthocyanin pigments. The chain is Anthocyanidin 3-O-glucosyltransferase (BZ1) from Hordeum vulgare (Barley).